A 2194-amino-acid chain; its full sequence is Nucleosome-remodeling factor subunit NURF301-like (2194 aa).

Residues 1–12 (MAPPRGRSKRKH) show a composition bias toward basic residues. Residues 1–137 (MAPPRGRSKR…EEEESSDDEF (137 aa)) are disordered. Positions 60–79 (AQRETPSDAEEVEVKIEEIS) are enriched in basic and acidic residues. Residues 80 to 93 (VRSTPASTPAPKST) are compositionally biased toward polar residues. Basic residues predominate over residues 94–112 (SKARGRPKKNPTPPRRKSL). The segment covering 118 to 137 (DIIYMDEDSEEEEESSDDEF) has biased composition (acidic residues). DDT domains follow at residues 196-256 (TASI…SDDE) and 341-396 (VGKF…SAVR). The PHD-type 1 zinc finger occupies 347–392 (DENCRVCGKSSGRVVGCTQCEAAFHVECSHLKPFPEVLVCNICKKN). Disordered regions lie at residues 1091–1122 (ESWL…SLDN), 1158–1255 (AKRK…PQPN), 1413–1433 (TSNF…PVYS), 1657–1701 (MRQE…SNDS), and 1834–1888 (ESIA…HTPG). Residues 1151-1187 (RAEAEKTAKRKLEATRKAQKAKEDEERRRIQQQQQRS) are a coiled coil. Basic and acidic residues predominate over residues 1158-1179 (AKRKLEATRKAQKAKEDEERRR). Over residues 1665-1684 (TSGYDSSGNPIRSITSSGDT) the composition is skewed to polar residues. The span at 1852-1861 (KSEDDRDKPE) shows a compositional bias: basic and acidic residues. DDT domains follow at residues 1883-1953 (AFHT…EQER) and 1948-2014 (IEEQ…AEGY). 2 consecutive PHD-type zinc fingers follow at residues 1899–1950 (IEHC…CIEE) and 1959–2010 (ALYC…CTRE). Residues 2030–2134 (QLTRADYTHV…EVFDKKLIDV (105 aa)) enclose the Bromo domain.

This sequence belongs to the BPTF family. Part of a nucleosome remodeling factor-like (NURF-like) complex containing nurf-1 and isw-1.

It is found in the nucleus. Functionally, histone-binding component of a NURF-like (nucleosome remodeling factor-like) complex, which would catalyze ATP-dependent nucleosome sliding and facilitate transcription of chromatin. Involved in vulval cell fates. The protein is Nucleosome-remodeling factor subunit NURF301-like (nurf-1) of Caenorhabditis elegans.